The primary structure comprises 100 residues: EKC/KEOPS complex subunit GON7 (100 aa).

At methionine 1 the chain carries N-acetylmethionine. The disordered stretch occupies residues 61-100 (AAAPDEDLDGDDEDDAEDENNIDNRTNFDGPSAKRPKTPS). Positions 64-81 (PDEDLDGDDEDDAEDENN) are enriched in acidic residues.

In terms of assembly, component of the EKC/KEOPS complex composed of at least GON7, TP53RK, TPRKB, OSGEP and LAGE3; the whole complex dimerizes.

The protein localises to the nucleus. In terms of biological role, component of the EKC/KEOPS complex that is required for the formation of a threonylcarbamoyl group on adenosine at position 37 (t(6)A37) in tRNAs that read codons beginning with adenine. The complex is probably involved in the transfer of the threonylcarbamoyl moiety of threonylcarbamoyl-AMP (TC-AMP) to the N6 group of A37. GON7 plays a supporting role to the catalytic subunit OSGEP in the complex. The sequence is that of EKC/KEOPS complex subunit GON7 from Homo sapiens (Human).